The primary structure comprises 106 residues: CRISPR-associated endoribonuclease Cas2 (106 aa).

Residue Asp22 coordinates Mg(2+).

Belongs to the CRISPR-associated endoribonuclease Cas2 protein family. As to quaternary structure, homodimer, forms a heterotetramer with a Cas1 homodimer. The cofactor is Mg(2+).

Functionally, CRISPR (clustered regularly interspaced short palindromic repeat), is an adaptive immune system that provides protection against mobile genetic elements (viruses, transposable elements and conjugative plasmids). CRISPR clusters contain sequences complementary to antecedent mobile elements and target invading nucleic acids. CRISPR clusters are transcribed and processed into CRISPR RNA (crRNA). Functions as a ssRNA-specific endoribonuclease. Involved in the integration of spacer DNA into the CRISPR cassette. This is CRISPR-associated endoribonuclease Cas2 from Fusobacterium nucleatum subsp. nucleatum (strain ATCC 25586 / DSM 15643 / BCRC 10681 / CIP 101130 / JCM 8532 / KCTC 2640 / LMG 13131 / VPI 4355).